We begin with the raw amino-acid sequence, 494 residues long: Lysine--tRNA ligase (494 aa).

Mg(2+) is bound by residues glutamate 407 and glutamate 414.

It belongs to the class-II aminoacyl-tRNA synthetase family. Homodimer. Mg(2+) serves as cofactor.

It localises to the cytoplasm. It catalyses the reaction tRNA(Lys) + L-lysine + ATP = L-lysyl-tRNA(Lys) + AMP + diphosphate. In Lactococcus lactis subsp. cremoris (strain SK11), this protein is Lysine--tRNA ligase.